Consider the following 491-residue polypeptide: Diacylglycerol O-acyltransferase 1 (491 aa).

The interval Met1 to Asp60 is disordered. At Met1–Asn86 the chain is on the cytoplasmic side. The involved in homomerization stretch occupies residues Met1 to Trp94. Phosphoserine is present on residues Ser20 and Ser21. The span at Ala37 to Pro50 shows a compositional bias: low complexity. A helical membrane pass occupies residues Asn87–Ile121. Topologically, residues Gln122–Ser133 are lumenal. The tract at residues Gln122 to Ser133 is extracellular loop 1 (EL1). A helical membrane pass occupies residues Trp134 to Val159. The interval Trp134–Ala491 is MBOAT fold. Residues Gly160–Glu164 lie on the Cytoplasmic side of the membrane. A helical membrane pass occupies residues Gln165 to Leu187. Residues Leu188–Pro194 are Lumenal-facing. A helical membrane pass occupies residues Val195 to Ala226. Residues Lys227–Ile276 lie on the Cytoplasmic side of the membrane. The intracellular loop 1 (IL1) stretch occupies residues Lys227 to Arg279. A helical transmembrane segment spans residues Arg277–Met311. Residues Lys312–Asp318 are Lumenal-facing. A helical membrane pass occupies residues Tyr319–Met356. The Cytoplasmic portion of the chain corresponds to Gln357–Ser402. Residues Gln357–Ser402 are intracellular loop 2 (IL2). Positions Phe363–Asn369 match the FYXDWWN motif motif. Residues Trp377–His385, Tyr393, and Arg407 each bind an acyl-CoA. The segment at Pro383–Leu397 is amphipathic helix (AH). A helical membrane pass occupies residues Arg403–Ser423. His418 is a catalytic residue. Over Val424 to Leu431 the chain is Lumenal. The chain crosses the membrane as a helical span at residues Trp432–Phe450. The Cytoplasmic portion of the chain corresponds to Phe451–Gln452. A helical transmembrane segment spans residues Gly453 to Tyr484. Tyr480 provides a ligand contact to an acyl-CoA. The Lumenal segment spans residues Glu485–Ala491.

It belongs to the membrane-bound acyltransferase family. Sterol o-acyltransferase subfamily. As to quaternary structure, homodimer or homotetramer; both forms have similar enzymatic activities.

Its subcellular location is the endoplasmic reticulum membrane. It carries out the reaction an acyl-CoA + a 1,2-diacyl-sn-glycerol = a triacyl-sn-glycerol + CoA. It catalyses the reaction all-trans-retinol + an acyl-CoA = an all-trans-retinyl ester + CoA. The catalysed reaction is 2-(9Z-octadecenoyl)-glycerol + (9Z)-octadecenoyl-CoA = 1,2-di-(9Z-octadecenoyl)-sn-glycerol + CoA. The enzyme catalyses 1,2-di-(9Z-octadecenoyl)-sn-glycerol + (9Z)-octadecenoyl-CoA = 1,2,3-tri-(9Z-octadecenoyl)-glycerol + CoA. It carries out the reaction all-trans-retinol + hexadecanoyl-CoA = all-trans-retinyl hexadecanoate + CoA. It catalyses the reaction 1-O-(9Z-octadecenyl)-glycerol + (9Z)-octadecenoyl-CoA = 1-O-(9Z-octadecyl)-3-(9Z-octadecenoyl)-glycerol + CoA. The catalysed reaction is 1-O-(9Z-octadecyl)-3-(9Z-octadecenoyl)-glycerol + (9Z)-octadecenoyl-CoA = 1-O-(9Z-octadecenyl)-2,3-di-(9Z-octadecenoyl)glycerol + CoA. The enzyme catalyses 1-(9Z-octadecenoyl)-glycerol + (9Z)-octadecenoyl-CoA = 1,2-di-(9Z-octadecenoyl)-glycerol + CoA. It carries out the reaction 1,2-di-(9Z-octadecenoyl)-glycerol + (9Z)-octadecenoate + H(+) = 1,2,3-tri-(9Z-octadecenoyl)-glycerol + H2O. It catalyses the reaction 1-octadecanoyl-2-(5Z,8Z,11Z,14Z-eicosatetraenoyl)-sn-glycerol + (9Z)-octadecenoyl-CoA = 1-octadecanoyl-2-(5Z,8Z,11Z,14Z)-eicosatetraenoyl-3-(9Z)-octadecenoyl-sn-glycerol + CoA. The catalysed reaction is hexadecane-1,2-diol + 2 hexadecanoyl-CoA = 1,2-O,O-dihexadecanoyl-1,2-hexadecanediol + 2 CoA. The enzyme catalyses hexadecane-1,2-diol + hexadecanoyl-CoA = 2-hydroxyhexadecyl hexadecanoate + CoA. It carries out the reaction 2-(9Z-octadecenoyl)-glycerol + hexadecanoyl-CoA = 1-hexadecanoyl-2-(9Z-octadecenoyl)-sn-glycerol + CoA. It catalyses the reaction 1,2-di-(9Z-octadecenoyl)-sn-glycerol + hexadecanoyl-CoA = 1,2-di-(9Z)-octadecenoyl-3-hexadecanoyl-sn-glycerol + CoA. The catalysed reaction is hexadecan-1-ol + hexadecanoyl-CoA = hexadecanyl hexadecanoate + CoA. The enzyme catalyses 13-cis-retinol + hexadecanoyl-CoA = 13-cis-retinyl hexadecanoate + CoA. It carries out the reaction 1,3-di-(9Z-octadecenoyl)-glycerol + (9Z)-octadecenoyl-CoA = 1,2,3-tri-(9Z-octadecenoyl)-glycerol + CoA. It catalyses the reaction 2,3-di-(9Z)-octadecenoyl-sn-glycerol + (9Z)-octadecenoyl-CoA = 1,2,3-tri-(9Z-octadecenoyl)-glycerol + CoA. It participates in lipid metabolism; glycerolipid metabolism. In terms of biological role, catalyzes the terminal and only committed step in triacylglycerol synthesis by using diacylglycerol and fatty acyl CoA as substrates. Highly expressed in epithelial cells of the small intestine and its activity is essential for the absorption of dietary fats. In liver, plays a role in esterifying exogenous fatty acids to glycerol, and is required to synthesize fat for storage. Also present in female mammary glands, where it produces fat in the milk. May be involved in VLDL (very low density lipoprotein) assembly. In contrast to DGAT2 it is not essential for survival. Functions as the major acyl-CoA retinol acyltransferase (ARAT) in the skin, where it acts to maintain retinoid homeostasis and prevent retinoid toxicity leading to skin and hair disorders. Exhibits additional acyltransferase activities, includin acyl CoA:monoacylglycerol acyltransferase (MGAT), wax monoester and wax diester synthases. Also able to use 1-monoalkylglycerol (1-MAkG) as an acyl acceptor for the synthesis of monoalkyl-monoacylglycerol (MAMAG). This is Diacylglycerol O-acyltransferase 1 (DGAT1) from Chlorocebus aethiops (Green monkey).